We begin with the raw amino-acid sequence, 307 residues long: Exosome complex component RRP45A (307 aa).

This sequence belongs to the RNase PH family. As to expression, expressed in roots, leaves, stems, buds and siliques.

It is found in the cytoplasm. Its subcellular location is the nucleus. Probable 3'-&gt;5' exoribonuclease involved in the regulation of cuticular wax biosynthesis. Can perform exosomal functions and partially complement the yeast rrp45 null mutant. The sequence is that of Exosome complex component RRP45A from Arabidopsis thaliana (Mouse-ear cress).